A 704-amino-acid polypeptide reads, in one-letter code: Elongation factor G 1 (704 aa).

The 284-residue stretch at 8-291 (ERYRNIGISA…AVIDYLPSPA (284 aa)) folds into the tr-type G domain. Residues 17-24 (AHIDAGKT), 88-92 (DTPGH), and 142-145 (NKMD) each bind GTP.

The protein belongs to the TRAFAC class translation factor GTPase superfamily. Classic translation factor GTPase family. EF-G/EF-2 subfamily.

Its subcellular location is the cytoplasm. Catalyzes the GTP-dependent ribosomal translocation step during translation elongation. During this step, the ribosome changes from the pre-translocational (PRE) to the post-translocational (POST) state as the newly formed A-site-bound peptidyl-tRNA and P-site-bound deacylated tRNA move to the P and E sites, respectively. Catalyzes the coordinated movement of the two tRNA molecules, the mRNA and conformational changes in the ribosome. The polypeptide is Elongation factor G 1 (Burkholderia thailandensis (strain ATCC 700388 / DSM 13276 / CCUG 48851 / CIP 106301 / E264)).